The following is a 223-amino-acid chain: Ribose-5-phosphate isomerase A (223 aa).

Substrate-binding positions include 28–31 (TGTT), 81–84 (DSAD), and 94–97 (KGGG). Residue E103 is the Proton acceptor of the active site. K121 serves as a coordination point for substrate.

The protein belongs to the ribose 5-phosphate isomerase family. Homodimer.

The catalysed reaction is aldehydo-D-ribose 5-phosphate = D-ribulose 5-phosphate. Its pathway is carbohydrate degradation; pentose phosphate pathway; D-ribose 5-phosphate from D-ribulose 5-phosphate (non-oxidative stage): step 1/1. Its function is as follows. Catalyzes the reversible conversion of ribose-5-phosphate to ribulose 5-phosphate. This Buchnera aphidicola subsp. Acyrthosiphon pisum (strain 5A) protein is Ribose-5-phosphate isomerase A.